Here is a 355-residue protein sequence, read N- to C-terminus: Protein pelota homolog (355 aa).

This sequence belongs to the eukaryotic release factor 1 family. Pelota subfamily. Monomer. Requires a divalent metal cation as cofactor.

The protein resides in the cytoplasm. Functionally, may function in recognizing stalled ribosomes, interact with stem-loop structures in stalled mRNA molecules, and effect endonucleolytic cleavage of the mRNA. May play a role in the release non-functional ribosomes and degradation of damaged mRNAs. Has endoribonuclease activity. The protein is Protein pelota homolog of Haloarcula marismortui (strain ATCC 43049 / DSM 3752 / JCM 8966 / VKM B-1809) (Halobacterium marismortui).